The chain runs to 255 residues: Small ribosomal subunit protein eS1 (255 aa).

Residues 1–18 (MAVGKNKRLSKGKKGLKK) are compositionally biased toward basic residues. A disordered region spans residues 1–20 (MAVGKNKRLSKGKKGLKKRV). Position 2 is an N-acetylalanine; partial (Ala-2).

The protein belongs to the eukaryotic ribosomal protein eS1 family. In terms of assembly, component of the small ribosomal subunit. Mature ribosomes consist of a small (40S) and a large (60S) subunit. The 40S subunit contains about 33 different proteins and 1 molecule of RNA (18S). The 60S subunit contains about 49 different proteins and 3 molecules of RNA (25S, 5.8S and 5S).

It is found in the cytoplasm. The sequence is that of Small ribosomal subunit protein eS1 from Coccidioides immitis (strain RS) (Valley fever fungus).